The following is a 203-amino-acid chain: Proteasome subunit beta 1 (203 aa).

The propeptide at 1–7 (MAEKLKG) is removed in mature form; by autocatalysis. Catalysis depends on threonine 8, which acts as the Nucleophile.

Belongs to the peptidase T1B family. As to quaternary structure, the 20S proteasome core is composed of 14 alpha and 14 beta subunits that assemble into four stacked heptameric rings, resulting in a barrel-shaped structure. The two inner rings, each composed of seven catalytic beta subunits, are sandwiched by two outer rings, each composed of seven alpha subunits. The catalytic chamber with the active sites is on the inside of the barrel. Has a gated structure, the ends of the cylinder being occluded by the N-termini of the alpha-subunits. Is capped at one or both ends by the proteasome regulatory ATPase, PAN.

The protein resides in the cytoplasm. The catalysed reaction is Cleavage of peptide bonds with very broad specificity.. The formation of the proteasomal ATPase PAN-20S proteasome complex, via the docking of the C-termini of PAN into the intersubunit pockets in the alpha-rings, triggers opening of the gate for substrate entry. Interconversion between the open-gate and close-gate conformations leads to a dynamic regulation of the 20S proteasome proteolysis activity. In terms of biological role, component of the proteasome core, a large protease complex with broad specificity involved in protein degradation. This is Proteasome subunit beta 1 from Thermococcus onnurineus (strain NA1).